Reading from the N-terminus, the 118-residue chain is Large ribosomal subunit protein bL20 (118 aa).

The protein belongs to the bacterial ribosomal protein bL20 family.

Its function is as follows. Binds directly to 23S ribosomal RNA and is necessary for the in vitro assembly process of the 50S ribosomal subunit. It is not involved in the protein synthesizing functions of that subunit. The protein is Large ribosomal subunit protein bL20 of Kosmotoga olearia (strain ATCC BAA-1733 / DSM 21960 / TBF 19.5.1).